We begin with the raw amino-acid sequence, 454 residues long: Replicative DNA helicase DnaB (454 aa).

Residues 1-149 (MSELFSERIP…LDEADRKIME (149 aa)) form an N-terminal domain (NTD) region. A linker helix region spans residues 163–176 (KDILVQTYDNIEML). Positions 179–445 (RDGEITGIPT…NKFVNLERRF (267 aa)) constitute an SF4 helicase domain. The tract at residues 183–454 (ITGIPTGFTE…FDEAQIPPGA (272 aa)) is C-terminal domain (CTD). ATP contacts are provided by serine 213, glycine 215, lysine 216, threonine 217, and alanine 218. Residue glutamate 241 is the Nucleophile of the active site. Residues arginine 250 and glutamine 362 each coordinate ATP. Residues arginine 381, glutamate 382, and glycine 384 each coordinate ssDNA. ATP contacts are provided by lysine 418, glutamine 419, and arginine 420.

The protein belongs to the helicase family. DnaB subfamily. Homohexamer. Interacts with DnaG primase, as DnaB(6):DnaG(3). Interacts with the N-terminus of DnaI (shown with DnaI of B.subtilis), forms a helicase DnaB(6):DnaI(6) complex. The DnaB-DnaI complex is disrupted by DnaD (DnaD and DnaI from B.subtilis). A stable complex DnaI(6):DnaB(6):DnaG(3) fragment can be isolated; DnaI and DnaG do not contact each other (DnaI in this complex is derived from B.subtilis). Forms a complex with DNA clamp loader protein tau (shown with B.subtilis HolA) tau(3):DnaB(6); a single ATP hydrolysis even is sufficient for complex formation.

The catalysed reaction is Couples ATP hydrolysis with the unwinding of duplex DNA at the replication fork by translocating in the 5'-3' direction. This creates two antiparallel DNA single strands (ssDNA). The leading ssDNA polymer is the template for DNA polymerase III holoenzyme which synthesizes a continuous strand.. The enzyme catalyses ATP + H2O = ADP + phosphate + H(+). Functionally, the main replicative DNA helicase, it participates in initiation and elongation during chromosome replication. Travels ahead of the DNA replisome, separating double-stranded (ds)DNA into templates for DNA synthesis. Binding of single-stranded (ss)DNA to the hexamer suggests a 2-nucleotide step size for the helicase and a hand-over-hand mechanism of DNA unwinding. Has ssDNA-stimulated ATPase activity. DnaG primase stimulates the helicase activity (the helicase direction was not determine but is probably 5'-3'). Loaded onto DNA by helicase loader DnaI (shown with DnaI of B.subtilis); ATP-binding enhances loading and subsequent ATP hydrolysis dissociates the complex, leaving helicase on the DNA. Binds ssDNA and less well dsDNA, in the presence of ADPNP (probably 5'-adenylyl beta, gamma-imidodiphosphate, but not ATP) binding to both DNAs is improved. The chain is Replicative DNA helicase DnaB from Geobacillus stearothermophilus (Bacillus stearothermophilus).